Reading from the N-terminus, the 281-residue chain is Sulfur carrier protein FdhD (281 aa).

Cys-117 functions as the Cysteine persulfide intermediate in the catalytic mechanism.

Belongs to the FdhD family.

It localises to the cytoplasm. Functionally, required for formate dehydrogenase (FDH) activity. Acts as a sulfur carrier protein that transfers sulfur from IscS to the molybdenum cofactor prior to its insertion into FDH. The chain is Sulfur carrier protein FdhD from Xanthomonas euvesicatoria pv. vesicatoria (strain 85-10) (Xanthomonas campestris pv. vesicatoria).